The sequence spans 118 residues: Ribosome-binding factor A (118 aa).

This sequence belongs to the RbfA family. In terms of assembly, monomer. Binds 30S ribosomal subunits, but not 50S ribosomal subunits or 70S ribosomes.

The protein localises to the cytoplasm. Functionally, one of several proteins that assist in the late maturation steps of the functional core of the 30S ribosomal subunit. Associates with free 30S ribosomal subunits (but not with 30S subunits that are part of 70S ribosomes or polysomes). Required for efficient processing of 16S rRNA. May interact with the 5'-terminal helix region of 16S rRNA. This Bacillus cereus (strain AH187) protein is Ribosome-binding factor A.